The chain runs to 288 residues: Protein sprouty homolog 3 (288 aa).

An SPR domain is found at 154 to 260 (KCVPCTAARP…GYDSLRRPGC (107 aa)).

Belongs to the sprouty family. As to quaternary structure, interacts with TESK1. Interacts with USP11. Interacts with CAV1 (via C-terminus). Widely expressed; particularly in the fetal tissues. Expressed in the brain with expression the highest in Purkinje cells in the cerebellum (at protein level). Expressed in the myocardium of the heart.

It localises to the cytoplasm. Its function is as follows. Inhibits neurite branching, arbor length and neurite complexity. Inhibits EGF-mediated p42/44 ERK signaling. Negatively regulates the MAPK cascade, resulting in a reduction of extracellular matrix protein accumulation. May function as an antagonist of fibroblast growth factor (FGF) pathways and may negatively modulate respiratory organogenesis. The sequence is that of Protein sprouty homolog 3 from Homo sapiens (Human).